Consider the following 23-residue polypeptide: Malate dehydrogenase (23 aa).

NAD(+) is bound at residue N7. R23 contributes to the substrate binding site.

It belongs to the LDH/MDH superfamily. MDH type 1 family. In terms of assembly, homodimer.

The catalysed reaction is (S)-malate + NAD(+) = oxaloacetate + NADH + H(+). This is Malate dehydrogenase from Pseudotsuga menziesii (Douglas-fir).